The chain runs to 413 residues: S-adenosylmethionine synthase (413 aa).

H15 is a binding site for ATP. Residue D17 coordinates Mg(2+). E43 contributes to the K(+) binding site. E56 and Q100 together coordinate L-methionine. The interval 100–110 is flexible loop; sequence QSPDISQGVNE. ATP is bound by residues 171-173, 248-249, D257, 263-264, A280, and K284; these read DGK, KF, and RK. D257 provides a ligand contact to L-methionine. Position 288 (K288) interacts with L-methionine.

The protein belongs to the AdoMet synthase family. As to quaternary structure, homotetramer; dimer of dimers. The cofactor is Mg(2+). It depends on K(+) as a cofactor.

Its subcellular location is the cytoplasm. The catalysed reaction is L-methionine + ATP + H2O = S-adenosyl-L-methionine + phosphate + diphosphate. It functions in the pathway amino-acid biosynthesis; S-adenosyl-L-methionine biosynthesis; S-adenosyl-L-methionine from L-methionine: step 1/1. Functionally, catalyzes the formation of S-adenosylmethionine (AdoMet) from methionine and ATP. The overall synthetic reaction is composed of two sequential steps, AdoMet formation and the subsequent tripolyphosphate hydrolysis which occurs prior to release of AdoMet from the enzyme. This Prochlorococcus marinus (strain MIT 9215) protein is S-adenosylmethionine synthase.